The chain runs to 432 residues: SVP1-like protein 2 (432 aa).

2 WD repeats span residues 223-263 (AHKS…LLYE) and 268-307 (LDRA…TSSG).

Belongs to the WD repeat PROPPIN family.

It is found in the vacuole membrane. Its subcellular location is the cytoplasmic vesicle membrane. Involved in mitochondrial or peroxisomal functions and amino acid signaling pathways. This is SVP1-like protein 2 (HSV2) from Debaryomyces hansenii (strain ATCC 36239 / CBS 767 / BCRC 21394 / JCM 1990 / NBRC 0083 / IGC 2968) (Yeast).